A 352-amino-acid chain; its full sequence is Serine/threonine-protein phosphatase 2A activator 2 (352 aa).

Belongs to the PTPA-type PPIase family.

It is found in the cytoplasm. The catalysed reaction is [protein]-peptidylproline (omega=180) = [protein]-peptidylproline (omega=0). Functionally, PPIases accelerate the folding of proteins. It catalyzes the cis-trans isomerization of proline imidic peptide bonds in oligopeptides. Acts as a regulatory subunit for PP2A-like phosphatases modulating their activity or substrate specificity, probably by inducing a conformational change in the catalytic subunit, a direct target of the PPIase. Can reactivate inactive phosphatase PP2A-phosphatase methylesterase complexes (PP2Ai) in presence of ATP and Mg(2+) by dissociating the inactive form from the complex. The polypeptide is Serine/threonine-protein phosphatase 2A activator 2 (rrd2) (Schizosaccharomyces pombe (strain 972 / ATCC 24843) (Fission yeast)).